Here is a 224-residue protein sequence, read N- to C-terminus: MEARMTGRRKVTRRDAMADAARAVGVACLGGFSLAALVRTASPVDARAIRPPGALPEQDFLAACVHCGLCVQACPYGTLSLAEWSDEAELGTPFFTPREVPCYMCKDVPCARACPTGALDRDIPSIRDADMGVAVLVGHETCLNYKGLNCSICVRVCPIRGDAISLEPQEIDGRRVMIPVVHSASCTGCGTCEKQCVLGHAAIRVLPRDLGLGGPGRNRAGRKA.

The first 41 residues, 1–41 (MEARMTGRRKVTRRDAMADAARAVGVACLGGFSLAALVRTA), serve as a signal peptide directing secretion. 4Fe-4S ferredoxin-type domains follow at residues 54-84 (ALPE…LAEW), 91-124 (GTPF…RDIP), 133-169 (VAVL…LEPQ), and 177-208 (MIPV…VLPR). [4Fe-4S] cluster contacts are provided by Cys-64, Cys-67, Cys-70, Cys-74, Cys-102, Cys-105, Cys-110, Cys-114, Cys-142, Cys-150, Cys-153, Cys-157, Cys-186, Cys-189, Cys-192, and Cys-196.

The protein operates within one-carbon metabolism; methylamine degradation. Involved in electron transfer. The sequence is that of Methylamine utilization ferredoxin-type protein MauM (mauM) from Paracoccus denitrificans (strain Pd 1222).